The primary structure comprises 445 residues: Phosphoglucosamine mutase (445 aa).

S102 (phosphoserine intermediate) is an active-site residue. Residues S102, D241, D243, and D245 each coordinate Mg(2+). S102 carries the phosphoserine modification.

This sequence belongs to the phosphohexose mutase family. Mg(2+) serves as cofactor. In terms of processing, activated by phosphorylation.

The enzyme catalyses alpha-D-glucosamine 1-phosphate = D-glucosamine 6-phosphate. Functionally, catalyzes the conversion of glucosamine-6-phosphate to glucosamine-1-phosphate. The protein is Phosphoglucosamine mutase of Shewanella sp. (strain W3-18-1).